The sequence spans 447 residues: Putative branched-chain amino acid carrier protein SAR1419 (447 aa).

Helical transmembrane passes span 6-26 (WVIG…IFPP), 40-60 (ILAF…VGAL), 74-94 (PKFS…LFAI), 114-134 (SSIA…YICL), 143-163 (IGSL…IKAY), 193-213 (GYLT…VNAV), 229-249 (LTAG…LGYI), 290-310 (LLGI…IVAV), 326-346 (FVLV…NAVI), 350-370 (IPVL…ILIA), 382-402 (IPVI…LGWL), and 417-437 (LEWF…GIFV).

This sequence belongs to the branched chain amino acid transporter family.

Its subcellular location is the cell membrane. Component of the transport system for branched-chain amino acids (leucine, isoleucine and valine), which is coupled to a proton motive force (Potential). Contributes to NaCl tolerance. This Staphylococcus aureus (strain MRSA252) protein is Putative branched-chain amino acid carrier protein SAR1419.